Consider the following 333-residue polypeptide: Photosystem II assembly protein Ycf48 (333 aa).

Residues Met1–Arg25 form the signal peptide.

The protein belongs to the Ycf48 family. As to quaternary structure, part of early PSII assembly complexes which includes D1 (psbA) and PsbI; not found in mature PSII. Binds to the lumenal side of PSII complexes. Interacts with YidC.

The protein localises to the cellular thylakoid lumen. In terms of biological role, a factor required for optimal assembly of photosystem II (PSII), acting in the early stages of PSII assembly. Also plays a role in replacement of photodamaged D1 (psbA). Assists YidC in synthesis of chlorophyll-binding proteins. The polypeptide is Photosystem II assembly protein Ycf48 (Synechococcus sp. (strain JA-2-3B'a(2-13)) (Cyanobacteria bacterium Yellowstone B-Prime)).